The chain runs to 354 residues: Selection and upkeep of intraepithelial T-cells protein 1 (354 aa).

Residues 23–141 (PSSEQFTVNS…EEAIAEVKVT (119 aa)) form the Ig-like V-type 1 domain. 2 disulfides stabilise this stretch: cysteine 49–cysteine 123 and cysteine 163–cysteine 217. In terms of domain architecture, Ig-like C1-type 2 spans 161–233 (VECNSEGWFP…TGQEERTSIV (73 aa)). Transmembrane regions (helical) follow at residues 243-263 (SVWI…IMMP), 283-303 (LIGI…TITL), and 326-346 (MTVM…LVYF).

Belongs to the SKINT family. In terms of tissue distribution, expressed in the thymus and skin.

It localises to the membrane. May act by engaging a cell surface molecule on immature T-cells in the embryonic thymus. This is Selection and upkeep of intraepithelial T-cells protein 1 (SKINT1) from Macaca fascicularis (Crab-eating macaque).